The following is a 520-amino-acid chain: Glucose-1-phosphate adenylyltransferase small subunit, chloroplastic (520 aa).

The N-terminal 71 residues, 1 to 71, are a transit peptide targeting the chloroplast; that stretch reads MASVSAIGVL…RNPIIVSPKA (71 aa).

It belongs to the bacterial/plant glucose-1-phosphate adenylyltransferase family. In terms of assembly, heterotetramer. As to expression, leaves.

It localises to the plastid. It is found in the chloroplast. It carries out the reaction alpha-D-glucose 1-phosphate + ATP + H(+) = ADP-alpha-D-glucose + diphosphate. Its pathway is glycan biosynthesis; starch biosynthesis. Activated by 3'phosphoglycerate, inhibited by orthophosphate. Allosteric regulation. In terms of biological role, this protein plays a role in synthesis of starch. It catalyzes the synthesis of the activated glycosyl donor, ADP-glucose from Glc-1-P and ATP. The sequence is that of Glucose-1-phosphate adenylyltransferase small subunit, chloroplastic (APS1) from Arabidopsis thaliana (Mouse-ear cress).